We begin with the raw amino-acid sequence, 603 residues long: Elongation factor 4 (603 aa).

In terms of domain architecture, tr-type G spans S7 to K189. GTP contacts are provided by residues D19–T24 and N136–D139.

The protein belongs to the TRAFAC class translation factor GTPase superfamily. Classic translation factor GTPase family. LepA subfamily.

It localises to the cell inner membrane. The enzyme catalyses GTP + H2O = GDP + phosphate + H(+). Its function is as follows. Required for accurate and efficient protein synthesis under certain stress conditions. May act as a fidelity factor of the translation reaction, by catalyzing a one-codon backward translocation of tRNAs on improperly translocated ribosomes. Back-translocation proceeds from a post-translocation (POST) complex to a pre-translocation (PRE) complex, thus giving elongation factor G a second chance to translocate the tRNAs correctly. Binds to ribosomes in a GTP-dependent manner. The chain is Elongation factor 4 from Prochlorococcus marinus (strain NATL2A).